The sequence spans 153 residues: MTKIKADPDGPEAQADACCGERTYHELLVNLNPIAQPLASRRLTRKLYKCIKKAVKQKQIRRGVKEVQKFINKGEKGIMVLAGDTLPIEVYCHLPVMCEDRNLPYVYIPSKTDLGAAAGSKRPTCVIMVKPHEEYQEAYDECLEEVQALPPPM.

A Glycyl lysine isopeptide (Lys-Gly) (interchain with G-Cter in SUMO2) cross-link involves residue lysine 3. Lysine 5 participates in a covalent cross-link: Glycyl lysine isopeptide (Lys-Gly) (interchain with G-Cter in SUMO); alternate. Residue lysine 5 forms a Glycyl lysine isopeptide (Lys-Gly) (interchain with G-Cter in SUMO1); alternate linkage. Lysine 5 is covalently cross-linked (Glycyl lysine isopeptide (Lys-Gly) (interchain with G-Cter in SUMO2); alternate).

It belongs to the eukaryotic ribosomal protein eL8 family. In terms of assembly, part of the H/ACA small nucleolar ribonucleoprotein (H/ACA snoRNP) complex, which contains NHP2/NOLA2, GAR1/NOLA1, NOP10/NOLA3, and DKC1/NOLA4, which is presumed to be the catalytic subunit. The complex contains a stable core formed by binding of one or two NOP10-DKC1 heterodimers to NHP2; GAR1 subsequently binds to this core via DKC1. The complex binds a box H/ACA small nucleolar RNA (snoRNA), which may target the specific site of modification within the RNA substrate. During assembly, the complex contains NAF1 instead of GAR1/NOLA1. The complex also interacts with TERC, which contains a 3'-terminal domain related to the box H/ACA snoRNAs. Specific interactions with snoRNAs or TERC are mediated by GAR1 and NHP2. Associates with NOLC1/NOPP140. H/ACA snoRNPs interact with the SMN complex, consisting of SMN1 or SMN2, GEMIN2/SIP1, DDX20/GEMIN3, and GEMIN4. This is mediated by interaction between GAR1 and SMN1 or SMN2. The SMN complex may be required for correct assembly of the H/ACA snoRNP complex. Component of the telomerase holoenzyme complex composed of one molecule of TERT, one molecule of WRAP53/TCAB1, two molecules of H/ACA ribonucleoprotein complex subunits DKC1, NOP10, NHP2 and GAR1, and a telomerase RNA template component (TERC). The telomerase holoenzyme complex is associated with TEP1, SMG6/EST1A and POT1.

It is found in the nucleus. The protein localises to the nucleolus. The protein resides in the cajal body. Required for ribosome biogenesis and telomere maintenance. Part of the H/ACA small nucleolar ribonucleoprotein (H/ACA snoRNP) complex, which catalyzes pseudouridylation of rRNA. This involves the isomerization of uridine such that the ribose is subsequently attached to C5, instead of the normal N1. Each rRNA can contain up to 100 pseudouridine ('psi') residues, which may serve to stabilize the conformation of rRNAs. May also be required for correct processing or intranuclear trafficking of TERC, the RNA component of the telomerase reverse transcriptase (TERT) holoenzyme. In Bos taurus (Bovine), this protein is H/ACA ribonucleoprotein complex subunit 2 (NHP2).